The following is a 131-amino-acid chain: Large ribosomal subunit protein bL12 (131 aa).

A compositionally biased stretch (basic and acidic residues) spans 99–125 (ESTPKPIKEGTNKDDAEETKKKLEEAG). Residues 99–131 (ESTPKPIKEGTNKDDAEETKKKLEEAGAKVTVK) form a disordered region.

This sequence belongs to the bacterial ribosomal protein bL12 family. As to quaternary structure, homodimer. Part of the ribosomal stalk of the 50S ribosomal subunit. Forms a multimeric L10(L12)X complex, where L10 forms an elongated spine to which 2 to 4 L12 dimers bind in a sequential fashion. Binds GTP-bound translation factors.

Its function is as follows. Forms part of the ribosomal stalk which helps the ribosome interact with GTP-bound translation factors. Is thus essential for accurate translation. The protein is Large ribosomal subunit protein bL12 of Gloeothece citriformis (strain PCC 7424) (Cyanothece sp. (strain PCC 7424)).